The primary structure comprises 471 residues: NADH-quinone oxidoreductase subunit N (471 aa).

14 helical membrane passes run 6-26 (FILP…LGVY), 30-50 (SSNI…ILIF), 70-90 (LSSF…SIST), 98-118 (IFLI…MVMI), 123-143 (LMVF…LASF), 158-178 (FVLS…VYGF), 198-218 (LTFG…AVPF), 230-250 (PTAV…TVFI), 264-284 (WQPI…IAAI), 292-312 (LIAY…STGS), 320-340 (IVYM…LLML), 365-385 (LSLL…GFFA), 400-420 (FLAI…LKII), and 438-458 (IWLK…FIFP).

This sequence belongs to the complex I subunit 2 family. In terms of assembly, NDH-1 is composed of 14 different subunits. Subunits NuoA, H, J, K, L, M, N constitute the membrane sector of the complex.

It is found in the cell inner membrane. The catalysed reaction is a quinone + NADH + 5 H(+)(in) = a quinol + NAD(+) + 4 H(+)(out). Functionally, NDH-1 shuttles electrons from NADH, via FMN and iron-sulfur (Fe-S) centers, to quinones in the respiratory chain. The immediate electron acceptor for the enzyme in this species is believed to be ubiquinone. Couples the redox reaction to proton translocation (for every two electrons transferred, four hydrogen ions are translocated across the cytoplasmic membrane), and thus conserves the redox energy in a proton gradient. The protein is NADH-quinone oxidoreductase subunit N of Pelagibacter ubique (strain HTCC1062).